The chain runs to 507 residues: Sensor protein CseC (507 aa).

The disordered stretch occupies residues Met1–Leu42. Residues Glu25–Gly37 show a composition bias toward gly residues. The next 2 helical transmembrane spans lie at Leu60–His80 and Ala183–Gly203. The HAMP domain maps to Gly204–Glu260. The 203-residue stretch at Asp268–Ala470 folds into the Histidine kinase domain. Phosphohistidine; by autocatalysis is present on His271. A disordered region spans residues Thr472 to Pro507. Residues Ser486–Pro507 are compositionally biased toward polar residues.

It localises to the cell membrane. It catalyses the reaction ATP + protein L-histidine = ADP + protein N-phospho-L-histidine.. Its function is as follows. Member of the two-component regulatory system CseB/CseC involved in the stability of the cell envelope, through activation of transcription of RNA polymerase sigma-E factor. CseC functions as a membrane-associated protein kinase that phosphorylates CseB in response to changes in the cell envelope. This chain is Sensor protein CseC (cseC), found in Streptomyces coelicolor (strain ATCC BAA-471 / A3(2) / M145).